The sequence spans 413 residues: MIAEIISIGTELLHGDIVDTNSAYLAEKLTGCGIDVHYISTVGDNKQRLYKTLQQAVERADLIITTGGLGPTMDDLTREAISEITTCPLVMRPDLVIDIEGYFNHKRTTMTPNNLKQSYLPEGAIPINNPVGTAPGILLEKDNYIIISLPGVPREMKIMFEESVLPYIKKKNNLMIISKELHFIGIGESTLETKLEDIMDSMNPSLALLAGDGEVKLKITGKGRTKKKIENKISEIVKTVRNRVGEYIYGEDETSLPDEIGKLLSKRGVTIALAESCTGGLIGARITDIPGSSAYFKGGVIAYSNEVKINHLGVNKNTINKEGAVSPETAAEMASGVRQRLEADIGLSVTGIAGPEGGTDEKPVGLVYVGLAGIDGEVKTYKLNFKGDRNKNRWLTTQSAFYYLYRYLKFSFK.

It belongs to the CinA family.

This Halothermothrix orenii (strain H 168 / OCM 544 / DSM 9562) protein is Putative competence-damage inducible protein.